The primary structure comprises 416 residues: UDP-N-acetylglucosamine 1-carboxyvinyltransferase (416 aa).

22–23 (KN) contributes to the phosphoenolpyruvate binding site. Arginine 92 is a UDP-N-acetyl-alpha-D-glucosamine binding site. The Proton donor role is filled by cysteine 116. Cysteine 116 is subject to 2-(S-cysteinyl)pyruvic acid O-phosphothioketal. UDP-N-acetyl-alpha-D-glucosamine is bound by residues 121–125 (RPIDQ), aspartate 304, and isoleucine 326.

The protein belongs to the EPSP synthase family. MurA subfamily.

The protein localises to the cytoplasm. It carries out the reaction phosphoenolpyruvate + UDP-N-acetyl-alpha-D-glucosamine = UDP-N-acetyl-3-O-(1-carboxyvinyl)-alpha-D-glucosamine + phosphate. It participates in cell wall biogenesis; peptidoglycan biosynthesis. Its function is as follows. Cell wall formation. Adds enolpyruvyl to UDP-N-acetylglucosamine. The polypeptide is UDP-N-acetylglucosamine 1-carboxyvinyltransferase (Desulfatibacillum aliphaticivorans).